Reading from the N-terminus, the 283-residue chain is 4-diphosphocytidyl-2-C-methyl-D-erythritol kinase (283 aa).

Residue lysine 10 is part of the active site. An ATP-binding site is contributed by 99–109 (PMGGGLGGGSS). The active site involves aspartate 141.

The protein belongs to the GHMP kinase family. IspE subfamily. As to quaternary structure, homodimer.

It carries out the reaction 4-CDP-2-C-methyl-D-erythritol + ATP = 4-CDP-2-C-methyl-D-erythritol 2-phosphate + ADP + H(+). It participates in isoprenoid biosynthesis; isopentenyl diphosphate biosynthesis via DXP pathway; isopentenyl diphosphate from 1-deoxy-D-xylulose 5-phosphate: step 3/6. In terms of biological role, catalyzes the phosphorylation of the position 2 hydroxy group of 4-diphosphocytidyl-2C-methyl-D-erythritol. The polypeptide is 4-diphosphocytidyl-2-C-methyl-D-erythritol kinase (Escherichia coli O81 (strain ED1a)).